The following is a 4481-amino-acid chain: Dynein axonemal heavy chain 17 (4481 aa).

Positions 1 to 1792 (MPDLRIDYLE…FANICDAQIK (1792 aa)) are stem. The stretch at 521 to 569 (LLYMCGGLLERPLILVEVVPRYSVMLEMFNTELDNAKLMYDAQMAASAD) is one Kelch 1 repeat. Positions 759–826 (ENVMEYIQEM…GRVANLNKRY (68 aa)) form a coiled coil. TPR repeat units lie at residues 1533-1566 (VVEA…YLET) and 1688-1722 (IWWT…QLNA). AAA regions lie at residues 1793–2014 (YSYE…VLVV), 2074–2295 (KIIK…IGFK), 2401–2649 (ELDP…IFQG), and 2747–2996 (SYNE…ERRY). Residues 1831–1838 (GPAGTGKT) and 2112–2119 (GNAGSGKS) each bind ATP. A Kelch 2 repeat occupies 2229–2275 (ISHLRTATPATVSRAGILYINPADLGWNPVVSSWIERRKVQSEKANL). Residues 2439 to 2446 (GNAGTGKS) and 2785 to 2792 (GVGGSGKQ) contribute to the ATP site. A Kelch 3 repeat occupies 2782-2834 (LLVGVGGSGKQSLSRLAAYISALDVFQITLKKGYAIPDLKMDLATQYIKSAVK). 2 coiled-coil regions span residues 3011–3071 (YQNL…IQVV) and 3241–3293 (DVAP…EKIK). The tract at residues 3011-3297 (YQNLLAKKRM…TAEKIKCQQE (287 aa)) is stalk. AAA regions lie at residues 3389 to 3616 (LTDD…EIEE) and 3826 to 4059 (VKNF…VLYN). One copy of the TPR 3 repeat lies at 4138 to 4173 (PESPYLYGLHPNAEIGFLTVTSEKLFRTVLEMQPKE). 2 Kelch repeats span residues 4272 to 4321 (NLGL…DLLQ) and 4339 to 4385 (VWLA…DMTA).

It belongs to the dynein heavy chain family. Consists of at least two heavy chains and a number of intermediate and light chains.

Its subcellular location is the cytoplasm. It is found in the cytoskeleton. It localises to the flagellum axoneme. Functionally, force generating protein component of the outer dynein arms (ODAs) in the sperm flagellum. Produces force towards the minus ends of microtubules. Dynein has ATPase activity; the force-producing power stroke is thought to occur on release of ADP. Plays a major role in sperm motility, implicated in sperm flagellar assembly and beating. In Mus musculus (Mouse), this protein is Dynein axonemal heavy chain 17.